The primary structure comprises 837 residues: MLKKASAFLIASCCVMSLAWAQANDNWYEGKPISAISFEGLEYIARGQLDTIFSQYKGQKWTYELYLEILQKVYDLEYFSEVSPKAVPTDPEYQYVMLQFTVKERPSVKGIKMVGNSQIRSGDLLSKILLKKGDIYNEVKMKVDQESLRRHYLDQGYAAVKISCEAKTEAGGVVVQFTIQEGKQTVVSRIQFKGNKAFTESVLKKVLSTQEARFLTSGVFKENALEADKAAVHSYYAERGYIDARVEGVAKTVDKKTDASRNLVTLTYTVVEGEQYRYGGVTIVGNQIFSTEELQAKIRLKRGAIMNMVAFEQGFQALADAYFENGYTSNYLNKEEHRDTAEKTLSFKITVVERERSHVEHIIIKGTKNTKDEVILREMLLKPGDVFSKSKFTDSLRNLFNLRYFSSLVPDVRPGSEQDLVDIILNVEEQSTANVQFGVTFSGVGEAGTFPLSLFCQWEEKNFLGKGNEISVNATLGSEAQSLKLGYVERWFLGSPLTVGFDFELTHKNLFVYRAGSYGNGLPHPYTSREQWASSPGLAESFRLKYSRFESAIGAHTGYQWYPRYAVIRVNGGVDFRVVKNFYDKDNNQPFDLTVKEQLNWTSINSFWTSVSFDGRDFAYDPSSGWFLGQRCTFNGLVPFLEKEHSFRSDTKAEFYVTLLNYPVSAVWNLKFVLAFYTGVSVQTYYGRRKSENGKGNGVRSGALVIDGVLVGRGWSEDAKKNTGDLLLHHWIEFRWPLAHGIVSFDFFFDAAMVYNIESQSPNGSSSASSSSSSSSSSSRTTSSEGLYKMSYGPGLRFTLPQFPLKLAFANTFTSPGGIPKTKKNWNFVLSFTVNNL.

A signal peptide spans 1–21 (MLKKASAFLIASCCVMSLAWA). Over 22–433 (QANDNWYEGK…ILNVEEQSTA (412 aa)) the chain is Periplasmic. 5 POTRA domains span residues 31-105 (KPIS…VKER), 106-182 (PSVK…IQEG), 185-273 (TVVS…VVEG), 276-354 (YRYG…VVER), and 357-430 (SHVE…VEEQ). The chain crosses the membrane as a beta stranded span at residues 434 to 442 (NVQFGVTFS). Residues 443 to 450 (GVGEAGTF) lie on the Extracellular; loop L1 side of the membrane. Residues 451-461 (PLSLFCQWEEK) form a beta stranded membrane-spanning segment. The Periplasmic portion of the chain corresponds to 462 to 468 (NFLGKGN). Residues 469–476 (EISVNATL) traverse the membrane as a beta stranded segment. The Extracellular; loop L2 portion of the chain corresponds to 477–478 (GS). The beta stranded transmembrane segment at 479–489 (EAQSLKLGYVE) threads the bilayer. Topologically, residues 490–499 (RWFLGSPLTV) are periplasmic. A beta stranded transmembrane segment spans residues 500 to 520 (GFDFELTHKNLFVYRAGSYGN). Topologically, residues 521–530 (GLPHPYTSRE) are extracellular; loop L3. The chain crosses the membrane as a beta stranded span at residues 531 to 543 (QWASSPGLAESFR). Residues 544-554 (LKYSRFESAIG) lie on the Periplasmic side of the membrane. Residues 555–568 (AHTGYQWYPRYAVI) traverse the membrane as a beta stranded segment. Over 569-601 (RVNGGVDFRVVKNFYDKDNNQPFDLTVKEQLNW) the chain is Extracellular; loop L4. Residues 602–615 (TSINSFWTSVSFDG) form a beta stranded membrane-spanning segment. Over 616–623 (RDFAYDPS) the chain is Periplasmic. A beta stranded membrane pass occupies residues 624–636 (SGWFLGQRCTFNG). The Extracellular; loop L5 portion of the chain corresponds to 637 to 644 (LVPFLEKE). Residues 645–658 (HSFRSDTKAEFYVT) traverse the membrane as a beta stranded segment. The Periplasmic segment spans residues 659–667 (LLNYPVSAV). A beta stranded transmembrane segment spans residues 668 to 682 (WNLKFVLAFYTGVSV). The Extracellular; loop L6 portion of the chain corresponds to 683–724 (QTYYGRRKSENGKGNGVRSGALVIDGVLVGRGWSEDAKKNTG). The beta stranded transmembrane segment at 725–736 (DLLLHHWIEFRW) threads the bilayer. Residues 737-741 (PLAHG) lie on the Periplasmic side of the membrane. A beta stranded transmembrane segment spans residues 742–756 (IVSFDFFFDAAMVYN). Over 757–786 (IESQSPNGSSSASSSSSSSSSSSRTTSSEG) the chain is Extracellular; loop L7. The interval 761 to 785 (SPNGSSSASSSSSSSSSSSRTTSSE) is disordered. Residues 765–784 (SSSASSSSSSSSSSSRTTSS) show a composition bias toward low complexity. A beta stranded membrane pass occupies residues 787–799 (LYKMSYGPGLRFT). The Periplasmic portion of the chain corresponds to 800-802 (LPQ). The chain crosses the membrane as a beta stranded span at residues 803–814 (FPLKLAFANTFT). Over 815–824 (SPGGIPKTKK) the chain is Extracellular; loop L8. Residues 825-829 (NWNFV) traverse the membrane as a beta stranded segment. Residues 830 to 837 (LSFTVNNL) lie on the Periplasmic side of the membrane.

The protein belongs to the BamA family. Part of 2 complexes of about 239 and 164 kDa.

The protein resides in the cell outer membrane. In terms of biological role, might be part of the outer membrane protein assembly complex, which is involved in assembly and insertion of beta-barrel proteins into the outer membrane. Its function is as follows. Both rabbit immune serum and rabbit antiserum specific for extracytoplasmic loop L4 promote bacteria internalization by rabbit peritoneal macrophages. Pools of human syphilitic sera from the USA and Columbia recognize both the N-terminal POTRA-containing and C-terminal beta-barrel domains as well as loop L4, showing this protein stimulates the immune system in both humans and rabbits. The polypeptide is Putative outer membrane protein assembly factor TP_0326 (tp92) (Treponema pallidum (strain Nichols)).